A 101-amino-acid chain; its full sequence is UPF0473 protein STER_1939 (101 aa).

Belongs to the UPF0473 family.

The protein is UPF0473 protein STER_1939 of Streptococcus thermophilus (strain ATCC BAA-491 / LMD-9).